The chain runs to 70 residues: Large ribosomal subunit protein eL38 (70 aa).

This sequence belongs to the eukaryotic ribosomal protein eL38 family.

The polypeptide is Large ribosomal subunit protein eL38 (RpL38) (Anopheles gambiae (African malaria mosquito)).